The sequence spans 357 residues: Protein RecA (357 aa).

67–74 (GPESSGKT) is an ATP binding site. The segment at 335–357 (LASSASDDESTEGNIDLETGEIF) is disordered.

The protein belongs to the RecA family.

The protein localises to the cytoplasm. Its function is as follows. Can catalyze the hydrolysis of ATP in the presence of single-stranded DNA, the ATP-dependent uptake of single-stranded DNA by duplex DNA, and the ATP-dependent hybridization of homologous single-stranded DNAs. It interacts with LexA causing its activation and leading to its autocatalytic cleavage. The polypeptide is Protein RecA (Shewanella putrefaciens (strain CN-32 / ATCC BAA-453)).